Consider the following 752-residue polypeptide: Phosphatidylinositol 4-phosphate 5-kinase 1 (752 aa).

MORN repeat units follow at residues 81–103 (YIGS…DGCM), 104–126 (YEGD…SGAT), 127–149 (YEGE…DGDT), 150–172 (YRGT…NGDF), 173–195 (YEGT…NGNQ), 196–218 (YTGE…NGNR), and 219–241 (YEGL…DGSS). The PIPK domain occupies 349-748 (SKGHKKYDLM…RFRDFISRIF (400 aa)). The tract at residues 708-729 (YDITKKIEHAYKSLQADPASIS) is activation loop.

In terms of processing, phosphorylation inactivates the enzyme. Expressed in the whole plant, preferentially in roots. Strongly expressed in meristematic tissues, namely procambial cell layers.

The catalysed reaction is a 1,2-diacyl-sn-glycero-3-phospho-(1D-myo-inositol 4-phosphate) + ATP = a 1,2-diacyl-sn-glycero-3-phospho-(1D-myo-inositol-4,5-bisphosphate) + ADP + H(+). Its function is as follows. Catalyzes the synthesis of phosphatidylinositol 4,5-bisphosphate and phosphatidylinositol 3,4-bisphosphate. The chain is Phosphatidylinositol 4-phosphate 5-kinase 1 (PIP5K1) from Arabidopsis thaliana (Mouse-ear cress).